We begin with the raw amino-acid sequence, 750 residues long: Photosystem I P700 chlorophyll a apoprotein A1 (750 aa).

The next 8 helical transmembrane spans lie at 70 to 93 (VFSAHFGQLSIIFLWLSGMYFHGA), 156 to 179 (LYCTAIGALVFAGLMLFAGWFHYH), 195 to 219 (LNHHLAGLLGLGSLSWAGHQVHVSL), 291 to 309 (IAHHHLAIAILFLIAGHMY), 346 to 369 (WHAQLSLNLAMLGSLTIVVAHHMY), 385 to 411 (LSLFTHHMWIGGFLIVGAAAHAAIFMV), 433 to 455 (AIISHLNWACIFLGFHSFGLYIH), and 531 to 549 (FLVHHIHAFTIHVTVLILL). 2 residues coordinate [4Fe-4S] cluster: Cys573 and Cys582. A run of 2 helical transmembrane segments spans residues 589–610 (HVFLGLFWMYNAISVVIFHFSW) and 664–686 (LSAYGLFFLGAHFVWAFSLMFLF). His675 is a chlorophyll a' binding site. Chlorophyll a is bound by residues Met683 and Tyr691. Position 692 (Trp692) interacts with phylloquinone. A helical membrane pass occupies residues 724–744 (AVGVTHYLLGGIATTWAFFLA).

It belongs to the PsaA/PsaB family. The PsaA/B heterodimer binds the P700 chlorophyll special pair and subsequent electron acceptors. PSI consists of a core antenna complex that captures photons, and an electron transfer chain that converts photonic excitation into a charge separation. The eukaryotic PSI reaction center is composed of at least 11 subunits. Requires P700 is a chlorophyll a/chlorophyll a' dimer, A0 is one or more chlorophyll a, A1 is one or both phylloquinones and FX is a shared 4Fe-4S iron-sulfur center. as cofactor.

The protein localises to the plastid. The protein resides in the chloroplast thylakoid membrane. The enzyme catalyses reduced [plastocyanin] + hnu + oxidized [2Fe-2S]-[ferredoxin] = oxidized [plastocyanin] + reduced [2Fe-2S]-[ferredoxin]. In terms of biological role, psaA and PsaB bind P700, the primary electron donor of photosystem I (PSI), as well as the electron acceptors A0, A1 and FX. PSI is a plastocyanin-ferredoxin oxidoreductase, converting photonic excitation into a charge separation, which transfers an electron from the donor P700 chlorophyll pair to the spectroscopically characterized acceptors A0, A1, FX, FA and FB in turn. Oxidized P700 is reduced on the lumenal side of the thylakoid membrane by plastocyanin. This chain is Photosystem I P700 chlorophyll a apoprotein A1, found in Drimys granadensis.